The chain runs to 485 residues: MQIYNSLSRRKELFTPAVPGKVNMYVCGITAYDLCHIGHARSAVVFDVLVRYLRHTGLDVTFARNFTDVDDKIIKRANEEGLTSQQVAEKYIDTFYEDMDRLNVLRADIEPKATGHILEMIALCEKLIAKGKAYATPSGDVYFRVRSFPEYGKLSGRDIDDMRSGARVAPGEEKEDPLDFALWKAAKPGEPSWTSPWGEGRPGWHIECSAMSEKHMPLPLDIHGGGQDLIFPHHENEIAQTEAALDKPFVRYWMHNGFVQVDAEKMSKSLGNFKTIRDILEGYLPEVLRFFLLTKHYRSPIDFTFDSMDEAEKSLKRIYEALSLARTERSRSKWSATPLPADVTAEFDTLDRAFDEALEDDLNTAAALGHVFGTIRLVNRLLEDKNLRKSAETLALLERLDGLVAKWMKVLGVFGREPEAFLSDLKECRIRRKGIDTTKVDALLEERKSVRAAKDFARADAIRDELAALGIEVRDTPSGAVWDVL.

Cys27 provides a ligand contact to Zn(2+). Residues 29-39 (ITAYDLCHIGH) carry the 'HIGH' region motif. Residues Cys208, His233, and Glu237 each contribute to the Zn(2+) site. Positions 265 to 269 (KMSKS) match the 'KMSKS' region motif. An ATP-binding site is contributed by Lys268.

It belongs to the class-I aminoacyl-tRNA synthetase family. Monomer. Zn(2+) serves as cofactor.

It localises to the cytoplasm. The enzyme catalyses tRNA(Cys) + L-cysteine + ATP = L-cysteinyl-tRNA(Cys) + AMP + diphosphate. The protein is Cysteine--tRNA ligase of Nitratidesulfovibrio vulgaris (strain ATCC 29579 / DSM 644 / CCUG 34227 / NCIMB 8303 / VKM B-1760 / Hildenborough) (Desulfovibrio vulgaris).